The primary structure comprises 217 residues: Ras-related protein Rab-19 (217 aa).

Residues S26, V28, G29, K30, T31, C32, Y42, S43, E44, S45, and T49 each contribute to the GTP site. Mg(2+) is bound at residue T31. The Switch 1 signature appears at 39-54; sequence SGVYSESQQNTIGVDF. Residues T49 and D72 each contribute to the Mg(2+) site. Residues 74-89 carry the Switch 2 motif; it reads AGQERFRTITQSYYRS. GTP is bound by residues G75, N130, K131, D133, S161, A162, and K163. Residues C215 and C217 are each lipidated (S-geranylgeranyl cysteine). A Cysteine methyl ester modification is found at C217.

The protein belongs to the small GTPase superfamily. Rab family. Mg(2+) is required as a cofactor.

It localises to the cell membrane. The catalysed reaction is GTP + H2O = GDP + phosphate + H(+). Its activity is regulated as follows. Regulated by guanine nucleotide exchange factors (GEFs) which promote the exchange of bound GDP for free GTP. Regulated by GTPase activating proteins (GAPs) which increase the GTP hydrolysis activity. Inhibited by GDP dissociation inhibitors (GDIs). The small GTPases Rab are key regulators of intracellular membrane trafficking, from the formation of transport vesicles to their fusion with membranes. Rabs cycle between an inactive GDP-bound form and an active GTP-bound form that is able to recruit to membranes different set of downstream effectors directly responsible for vesicle formation, movement, tethering and fusion. This is Ras-related protein Rab-19 from Rattus norvegicus (Rat).